The chain runs to 79 residues: UPF0180 protein BCE_1513 (79 aa).

Belongs to the UPF0180 family.

The chain is UPF0180 protein BCE_1513 from Bacillus cereus (strain ATCC 10987 / NRS 248).